An 816-amino-acid polypeptide reads, in one-letter code: Metabotropic glutamate receptor-like protein E (816 aa).

Residues 1–27 form the signal peptide; it reads MKIKIGNILKNVVILVIFSLFISKINS. The Extracellular segment spans residues 28–436; it reads EVVKPNPAKP…QVVVFDRTLN (409 aa). N-linked (GlcNAc...) asparagine glycans are attached at residues N68, N311, and N388. A helical membrane pass occupies residues 437–457; it reads IVLGVITGVCVLIVIGIGSVI. The Cytoplasmic portion of the chain corresponds to 458–469; sequence ALQWRKFRYSSP. The chain crosses the membrane as a helical span at residues 470–490; the sequence is LFCMFIIIGALMGLASVFTLL. The Extracellular portion of the chain corresponds to 491–496; the sequence is PTPTTP. A helical membrane pass occupies residues 497–517; sequence LCSGFPWLLGLGYVIVFGTLF. At 518-541 the chain is on the cytoplasmic side; sequence TKTWRTWRLFSNARKFKIIRITNK. The chain crosses the membrane as a helical span at residues 542-562; that stretch reads FIITLVGGFVLLESIFMIIWT. The Extracellular portion of the chain corresponds to 563 to 590; the sequence is AVDRPIPLAEPIFKAGEAQLQCTSDSEA. Residues 591–611 form a helical membrane-spanning segment; the sequence is WWYVFVFYKVFYILFGVFLAF. At 612 to 625 the chain is on the cytoplasmic side; sequence KTRNVVDSLNESKP. A helical transmembrane segment spans residues 626–646; the sequence is ITLALYNLTFVMVVAIALGFI. Topologically, residues 647-653 are extracellular; it reads LRDNPIA. Residues 654 to 674 traverse the membrane as a helical segment; that stretch reads IIVIQTIAILLGFTVTVSVLF. The Cytoplasmic portion of the chain corresponds to 675 to 816; the sequence is LPKVWMILSG…KKKKKKNNNK (142 aa). Positions 697–718 are disordered; it reads DSMGRSNGNTTEAESTRGYTNK.

The protein belongs to the G-protein coupled receptor 3 family.

It localises to the membrane. Functionally, may be involved in early development in cAMP sensing and subsequent chemotactic response. Probable receptor of GABA and glutamate, leading respectively to the induction or inhibition of SDF-2 formation. The protein is Metabotropic glutamate receptor-like protein E (grlE) of Dictyostelium discoideum (Social amoeba).